We begin with the raw amino-acid sequence, 398 residues long: Argininosuccinate synthase (398 aa).

8–16 is a binding site for ATP; it reads AYSGGLDTT. Y87 contacts L-citrulline. G117 lines the ATP pocket. Positions 119, 123, and 124 each coordinate L-aspartate. Residue N123 coordinates L-citrulline. L-citrulline contacts are provided by R127, S175, E259, and Y271.

This sequence belongs to the argininosuccinate synthase family. Type 1 subfamily. In terms of assembly, homotetramer.

The protein resides in the cytoplasm. It carries out the reaction L-citrulline + L-aspartate + ATP = 2-(N(omega)-L-arginino)succinate + AMP + diphosphate + H(+). The protein operates within amino-acid biosynthesis; L-arginine biosynthesis; L-arginine from L-ornithine and carbamoyl phosphate: step 2/3. The protein is Argininosuccinate synthase of Corynebacterium jeikeium (strain K411).